The sequence spans 209 residues: High frequency lysogenization protein HflD homolog (209 aa).

Positions 95-132 (LERKLAASKGAMNTLGNRIADLSRQLEHFELESDTLMS) form a coiled coil.

It belongs to the HflD family.

The protein localises to the cytoplasm. The protein resides in the cell inner membrane. The chain is High frequency lysogenization protein HflD homolog from Cronobacter sakazakii (strain ATCC BAA-894) (Enterobacter sakazakii).